We begin with the raw amino-acid sequence, 365 residues long: Histidinol-phosphate aminotransferase (365 aa).

The residue at position 223 (K223) is an N6-(pyridoxal phosphate)lysine.

The protein belongs to the class-II pyridoxal-phosphate-dependent aminotransferase family. Histidinol-phosphate aminotransferase subfamily. As to quaternary structure, homodimer. Pyridoxal 5'-phosphate is required as a cofactor.

It catalyses the reaction L-histidinol phosphate + 2-oxoglutarate = 3-(imidazol-4-yl)-2-oxopropyl phosphate + L-glutamate. It functions in the pathway amino-acid biosynthesis; L-histidine biosynthesis; L-histidine from 5-phospho-alpha-D-ribose 1-diphosphate: step 7/9. In Brucella abortus (strain 2308), this protein is Histidinol-phosphate aminotransferase.